A 308-amino-acid chain; its full sequence is Ferredoxin--NADP reductase (308 aa).

Residues Glu-26, Gln-34, Tyr-39, Val-77, Phe-106, Asp-266, and Thr-306 each contribute to the FAD site.

Belongs to the ferredoxin--NADP reductase type 2 family. As to quaternary structure, homodimer. FAD is required as a cofactor.

It carries out the reaction 2 reduced [2Fe-2S]-[ferredoxin] + NADP(+) + H(+) = 2 oxidized [2Fe-2S]-[ferredoxin] + NADPH. The protein is Ferredoxin--NADP reductase of Lactobacillus delbrueckii subsp. bulgaricus (strain ATCC 11842 / DSM 20081 / BCRC 10696 / JCM 1002 / NBRC 13953 / NCIMB 11778 / NCTC 12712 / WDCM 00102 / Lb 14).